Reading from the N-terminus, the 192-residue chain is Bifunctional protein PyrR (192 aa).

Substrate-binding positions include 49-50, arginine 90, 111-119, arginine 144, and valine 168; these read SG and DDVLFSGRT. Residues 107-119 carry the PRPP-binding motif; it reads VILVDDVLFSGRT.

The protein belongs to the purine/pyrimidine phosphoribosyltransferase family. PyrR subfamily.

It catalyses the reaction UMP + diphosphate = 5-phospho-alpha-D-ribose 1-diphosphate + uracil. Functionally, regulates the transcription of the pyrimidine nucleotide (pyr) operon in response to exogenous pyrimidines. Its function is as follows. Also displays a weak uracil phosphoribosyltransferase activity which is not physiologically significant. The sequence is that of Bifunctional protein PyrR from Corynebacterium glutamicum (strain ATCC 13032 / DSM 20300 / JCM 1318 / BCRC 11384 / CCUG 27702 / LMG 3730 / NBRC 12168 / NCIMB 10025 / NRRL B-2784 / 534).